The following is a 167-amino-acid chain: Phospholipase A2 (167 aa).

W38, G40, and G42 together coordinate Ca(2+). 5 cysteine pairs are disulfide-bonded: C39–C61, C60–C99, C67–C92, C90–C127, and C132–C144. N47 is a glycosylation site (N-linked (GlcNAc...) asparagine). H64 is a catalytic residue. D65 is a Ca(2+) binding site. A propeptide spanning residues 136 to 140 (ARSAR) is cleaved from the precursor.

Belongs to the phospholipase A2 family. Group III subfamily. As to quaternary structure, heterodimer composed of a large subunit and a small subunit; disulfide-linked. Requires Ca(2+) as cofactor. As to expression, expressed by the venom gland.

The protein localises to the secreted. The enzyme catalyses a 1,2-diacyl-sn-glycero-3-phosphocholine + H2O = a 1-acyl-sn-glycero-3-phosphocholine + a fatty acid + H(+). Its function is as follows. Phospholipase toxin, which catalyzes the calcium-dependent hydrolysis of the 2-acyl groups in 3-sn-phosphoglycerides. Inhibits both skeletal (RYR1) and cardiac (RYR2) ryanodine receptors (calcium release channels). Probably blocks ryanodine receptors by generating a lipid product. Shows hemolytic activity, but it is not know if it is direct or indirect. This Hottentotta tamulus (Eastern Indian scorpion) protein is Phospholipase A2.